The chain runs to 858 residues: Protein 4.1 (858 aa).

The interval 1–125 (MTTEKSLAAE…KEIELGNSLD (125 aa)) is disordered. The residue at position 14 (Ser14) is a Phosphoserine. The span at 31–50 (QQETQLEEASQAAAAEGSDQ) shows a compositional bias: low complexity. Position 62 is a phosphothreonine (Thr62). Over residues 63–77 (PTHEDLTKNKERTSE) the composition is skewed to basic and acidic residues. Low complexity predominate over residues 78 to 89 (SRGLSRLLSSFL). A phosphoserine mark is found at Ser86, Ser87, Ser97, Ser106, Ser123, Ser151, Ser153, and Ser154. Residues 103-119 (EVESEKEKGEGGQKEIE) are compositionally biased toward basic and acidic residues. The disordered stretch occupies residues 155 to 208 (IETQPAQEEHREDPDSETKEGEGIEECSGTEVKEDPESRAEREPEASQKPVRRH). Basic and acidic residues-rich tracts occupy residues 161 to 176 (QEEH…KEGE) and 185 to 200 (EVKE…EPEA). Ser192 is modified (phosphoserine). The 282-residue stretch at 211-492 (MHCKVSLLDD…EHHTFFRLTS (282 aa)) folds into the FERM domain. Tyr223 carries the phosphotyrosine modification. A Phosphothreonine modification is found at Thr379. The segment at 495 to 608 (TIPKSKFLAL…PAEPEPTEAW (114 aa)) is hydrophilic. The segment at 518–636 (TRQASALIDR…TQKLAGKGED (119 aa)) is disordered. 4 positions are modified to phosphoserine: Ser522, Ser541, Ser543, and Ser556. Composition is skewed to basic and acidic residues over residues 581-595 (TPKE…RGEE) and 606-615 (EAWKVEKTHT). Residues 609–707 (KVEKTHTEVT…WDKRLSTHSP (99 aa)) are spectrin--actin-binding. A compositionally biased stretch (polar residues) spans 616–629 (EVTVPTSNGDQTQK). Tyr654 carries the phosphotyrosine modification. Phosphoserine occurs at positions 658, 668, 678, 703, and 706. A C-terminal (CTD) region spans residues 710-858 (TLNINGQVPT…VHQETEISEE (149 aa)). Phosphothreonine is present on residues Thr730 and Thr853.

As to quaternary structure, binds with a high affinity to glycophorin and with lower affinity to band III protein. Associates with the nuclear mitotic apparatus. Binds calmodulin, CPAP and DLG1. Also found to associate with contractile apparatus and tight junctions. Interacts with NUMA1; this interaction is negatively regulated by CDK1 during metaphase and promotes anaphase-specific localization of NUMA1 in symmetrically dividing cells. Interacts with ATP2B1; regulates small intestinal calcium absorption through regulation of membrane expression of ATP2B1. Post-translationally, O-glycosylated; contains N-acetylglucosamine side chains in the C-terminal domain. Phosphorylated at multiple sites by different protein kinases and each phosphorylation event selectively modulates the protein's functions. In terms of processing, phosphorylation on Tyr-654 reduces the ability of 4.1 to promote the assembly of the spectrin/actin/4.1 ternary complex.

Its subcellular location is the nucleus. It localises to the cytoplasm. It is found in the cytoskeleton. The protein localises to the cell cortex. Functionally, protein 4.1 is a major structural element of the erythrocyte membrane skeleton. It plays a key role in regulating membrane physical properties of mechanical stability and deformability by stabilizing spectrin-actin interaction. Recruits DLG1 to membranes. Required for dynein-dynactin complex and NUMA1 recruitment at the mitotic cell cortex during anaphase. In Mus musculus (Mouse), this protein is Protein 4.1.